The sequence spans 398 residues: Phosphoglycerate kinase (398 aa).

Substrate contacts are provided by residues 21–23 (DFN), arginine 36, 59–62 (HLGR), arginine 119, and arginine 157. ATP contacts are provided by residues lysine 208, glycine 296, glutamate 327, and 354-357 (GGDS).

The protein belongs to the phosphoglycerate kinase family. In terms of assembly, monomer.

The protein localises to the cytoplasm. It catalyses the reaction (2R)-3-phosphoglycerate + ATP = (2R)-3-phospho-glyceroyl phosphate + ADP. Its pathway is carbohydrate degradation; glycolysis; pyruvate from D-glyceraldehyde 3-phosphate: step 2/5. The polypeptide is Phosphoglycerate kinase (Lactococcus lactis subsp. cremoris (strain MG1363)).